Reading from the N-terminus, the 92-residue chain is Small ribosomal subunit protein bS18 (92 aa).

This sequence belongs to the bacterial ribosomal protein bS18 family. As to quaternary structure, part of the 30S ribosomal subunit. Forms a tight heterodimer with protein bS6.

Binds as a heterodimer with protein bS6 to the central domain of the 16S rRNA, where it helps stabilize the platform of the 30S subunit. The protein is Small ribosomal subunit protein bS18 of Chlorobium chlorochromatii (strain CaD3).